Consider the following 43-residue polypeptide: uncharacterized protein (43 aa).

2 stretches are compositionally biased toward polar residues: residues 1–19 (MSQKLSFFQQNTRNGSGAS) and 33–43 (PENSISKTFSK). Positions 1-43 (MSQKLSFFQQNTRNGSGASRTLVIKPPTIQPKPENSISKTFSK) are disordered.

This is an uncharacterized protein from Dictyostelium discoideum (Social amoeba).